The chain runs to 388 residues: Succinate--CoA ligase [ADP-forming] subunit beta (388 aa).

An ATP-grasp domain is found at 9–244 (KQLFARYGLP…QSQEDPRAAQ (236 aa)). Residues Lys46, 53–55 (GRG), Glu99, Thr102, and Glu107 each bind ATP. Positions 199 and 213 each coordinate Mg(2+). Substrate contacts are provided by residues Asn264 and 321-323 (GIV).

It belongs to the succinate/malate CoA ligase beta subunit family. In terms of assembly, heterotetramer of two alpha and two beta subunits. Requires Mg(2+) as cofactor.

It catalyses the reaction succinate + ATP + CoA = succinyl-CoA + ADP + phosphate. It carries out the reaction GTP + succinate + CoA = succinyl-CoA + GDP + phosphate. It participates in carbohydrate metabolism; tricarboxylic acid cycle; succinate from succinyl-CoA (ligase route): step 1/1. Succinyl-CoA synthetase functions in the citric acid cycle (TCA), coupling the hydrolysis of succinyl-CoA to the synthesis of either ATP or GTP and thus represents the only step of substrate-level phosphorylation in the TCA. The beta subunit provides nucleotide specificity of the enzyme and binds the substrate succinate, while the binding sites for coenzyme A and phosphate are found in the alpha subunit. The sequence is that of Succinate--CoA ligase [ADP-forming] subunit beta from Shigella flexneri serotype 5b (strain 8401).